A 117-amino-acid chain; its full sequence is Flagellar transcriptional regulator FlhD (117 aa).

It belongs to the FlhD family. Homodimer; disulfide-linked. Forms a heterohexamer composed of two FlhC and four FlhD subunits. Each FlhC binds a FlhD dimer, forming a heterotrimer, and a hexamer assembles by dimerization of two heterotrimers.

The protein localises to the cytoplasm. Its function is as follows. Functions in complex with FlhC as a master transcriptional regulator that regulates transcription of several flagellar and non-flagellar operons by binding to their promoter region. Activates expression of class 2 flagellar genes, including fliA, which is a flagellum-specific sigma factor that turns on the class 3 genes. Also regulates genes whose products function in a variety of physiological pathways. The sequence is that of Flagellar transcriptional regulator FlhD from Photorhabdus laumondii subsp. laumondii (strain DSM 15139 / CIP 105565 / TT01) (Photorhabdus luminescens subsp. laumondii).